Consider the following 418-residue polypeptide: Probable serine hydroxymethyltransferase (418 aa).

(6S)-5,6,7,8-tetrahydrofolate is bound by residues Leu118 and 122-124 (GHL). N6-(pyridoxal phosphate)lysine is present on Lys226. (6S)-5,6,7,8-tetrahydrofolate is bound at residue 351-353 (SPF).

This sequence belongs to the SHMT family. In terms of assembly, homodimer. The cofactor is pyridoxal 5'-phosphate.

Its subcellular location is the cytoplasm. It catalyses the reaction (6R)-5,10-methylene-5,6,7,8-tetrahydrofolate + glycine + H2O = (6S)-5,6,7,8-tetrahydrofolate + L-serine. The protein operates within one-carbon metabolism; tetrahydrofolate interconversion. Its function is as follows. Catalyzes the reversible interconversion of serine and glycine with tetrahydrofolate (THF) serving as the one-carbon carrier. This reaction serves as the major source of one-carbon groups required for the biosynthesis of purines, thymidylate, methionine, and other important biomolecules. The sequence is that of Probable serine hydroxymethyltransferase from Mesomycoplasma hyopneumoniae (strain 232) (Mycoplasma hyopneumoniae).